A 966-amino-acid polypeptide reads, in one-letter code: Aminopeptidase N (966 aa).

At 1-8 (MAKGFYIS) the chain is on the cytoplasmic side. The helical; Signal-anchor for type II membrane protein transmembrane segment at 9-32 (KSLGILGILLGVAALCTIVALSVV) threads the bilayer. The segment at 33–65 (YRQEKNKNTSQSPSMAPLNPTATSSPATTLDQN) is cytosolic Ser/Thr-rich junction. The Extracellular segment spans residues 33–966 (YRQEKNKNTS…VLAWFTANSA (934 aa)). 2 N-linked (GlcNAc...) asparagine glycosylation sites follow: asparagine 40 and asparagine 125. The tract at residues 40 to 61 (NTSQSPSMAPLNPTATSSPATT) is disordered. Residues 66–966 (LPWNRYRLPK…VLAWFTANSA (901 aa)) form a metalloprotease region. Tyrosine 173 carries the post-translational modification Sulfotyrosine. N-linked (GlcNAc...) asparagine glycans are attached at residues asparagine 259 and asparagine 315. 348–352 (GAMEN) lines the substrate pocket. Histidine 384 contributes to the Zn(2+) binding site. Glutamate 385 serves as the catalytic Proton acceptor. 2 residues coordinate Zn(2+): histidine 388 and glutamate 407. Sulfotyrosine occurs at positions 415 and 420. N-linked (GlcNAc...) asparagine glycosylation is found at asparagine 552, asparagine 570, asparagine 624, and asparagine 734. 2 disulfides stabilise this stretch: cysteine 760/cysteine 767 and cysteine 797/cysteine 833. Asparagine 817 carries N-linked (GlcNAc...) asparagine glycosylation. Residue tyrosine 852 is modified to Phosphotyrosine. Tyrosine 912 carries the sulfotyrosine modification.

This sequence belongs to the peptidase M1 family. As to quaternary structure, homodimer. Interacts with SLC6A19. Zn(2+) is required as a cofactor. Sulfated. In terms of processing, N- and O-glycosylated. Post-translationally, may undergo proteolysis and give rise to a soluble form.

It is found in the cell membrane. The enzyme catalyses Release of an N-terminal amino acid, Xaa-|-Yaa- from a peptide, amide or arylamide. Xaa is preferably Ala, but may be most amino acids including Pro (slow action). When a terminal hydrophobic residue is followed by a prolyl residue, the two may be released as an intact Xaa-Pro dipeptide.. Its function is as follows. Broad specificity aminopeptidase which plays a role in the final digestion of peptides generated from hydrolysis of proteins by gastric and pancreatic proteases. Also involved in the processing of various peptides including peptide hormones, such as angiotensin III and IV, neuropeptides, and chemokines. May also be involved the cleavage of peptides bound to major histocompatibility complex class II molecules of antigen presenting cells. May have a role in angiogenesis and promote cholesterol crystallization. May have a role in amino acid transport by acting as binding partner of amino acid transporter SLC6A19 and regulating its activity. This chain is Aminopeptidase N (ANPEP), found in Oryctolagus cuniculus (Rabbit).